We begin with the raw amino-acid sequence, 546 residues long: Probable protein kinase UbiB (546 aa).

The Protein kinase domain maps to 124-502 (DFDIQPLASA…HVRQSQSRYL (379 aa)). Residues 130–138 (LASASIAQV) and Lys-153 contribute to the ATP site. Catalysis depends on Asp-288, which acts as the Proton acceptor. 2 consecutive transmembrane segments (helical) span residues 501–521 (YLLG…VNRP) and 522–542 (EWGL…LVGW).

It belongs to the ABC1 family. UbiB subfamily.

The protein localises to the cell inner membrane. The protein operates within cofactor biosynthesis; ubiquinone biosynthesis [regulation]. In terms of biological role, is probably a protein kinase regulator of UbiI activity which is involved in aerobic coenzyme Q (ubiquinone) biosynthesis. The polypeptide is Probable protein kinase UbiB (Salmonella gallinarum (strain 287/91 / NCTC 13346)).